Here is a 174-residue protein sequence, read N- to C-terminus: 2-C-methyl-D-erythritol 2,4-cyclodiphosphate synthase (174 aa).

Aspartate 13, histidine 15, and histidine 61 together coordinate a divalent metal cation. Aspartate 13–histidine 15 lines the 4-CDP-2-C-methyl-D-erythritol 2-phosphate pocket. Residues aspartate 75–glycine 77, threonine 149–aspartate 152, phenylalanine 156, and histidine 159 each bind 4-CDP-2-C-methyl-D-erythritol 2-phosphate.

Belongs to the IspF family. Homotrimer. The cofactor is a divalent metal cation.

The enzyme catalyses 4-CDP-2-C-methyl-D-erythritol 2-phosphate = 2-C-methyl-D-erythritol 2,4-cyclic diphosphate + CMP. The protein operates within isoprenoid biosynthesis; isopentenyl diphosphate biosynthesis via DXP pathway; isopentenyl diphosphate from 1-deoxy-D-xylulose 5-phosphate: step 4/6. Involved in the biosynthesis of isopentenyl diphosphate (IPP) and dimethylallyl diphosphate (DMAPP), two major building blocks of isoprenoid compounds. Catalyzes the conversion of 4-diphosphocytidyl-2-C-methyl-D-erythritol 2-phosphate (CDP-ME2P) to 2-C-methyl-D-erythritol 2,4-cyclodiphosphate (ME-CPP) with a corresponding release of cytidine 5-monophosphate (CMP). The chain is 2-C-methyl-D-erythritol 2,4-cyclodiphosphate synthase from Bifidobacterium longum (strain NCC 2705).